We begin with the raw amino-acid sequence, 316 residues long: Ribosomal RNA small subunit methyltransferase H (316 aa).

Residues 35-37 (GGH), D55, F79, D101, and Q108 each bind S-adenosyl-L-methionine. Positions 291–316 (ALKPSDQEVELNPRSRSSVLRVAEKL) are disordered.

The protein belongs to the methyltransferase superfamily. RsmH family.

It is found in the cytoplasm. The catalysed reaction is cytidine(1402) in 16S rRNA + S-adenosyl-L-methionine = N(4)-methylcytidine(1402) in 16S rRNA + S-adenosyl-L-homocysteine + H(+). In terms of biological role, specifically methylates the N4 position of cytidine in position 1402 (C1402) of 16S rRNA. This Vibrio cholerae serotype O1 (strain ATCC 39315 / El Tor Inaba N16961) protein is Ribosomal RNA small subunit methyltransferase H.